Here is a 211-residue protein sequence, read N- to C-terminus: Molybdenum cofactor guanylyltransferase (211 aa).

Residues 12–14 (LAG), Lys25, Asn55, Asp73, and Asp103 each bind GTP. Asp103 contributes to the Mg(2+) binding site.

It belongs to the MobA family. In terms of assembly, monomer. Mg(2+) is required as a cofactor.

The protein localises to the cytoplasm. It carries out the reaction Mo-molybdopterin + GTP + H(+) = Mo-molybdopterin guanine dinucleotide + diphosphate. Its function is as follows. Transfers a GMP moiety from GTP to Mo-molybdopterin (Mo-MPT) cofactor (Moco or molybdenum cofactor) to form Mo-molybdopterin guanine dinucleotide (Mo-MGD) cofactor. This Albidiferax ferrireducens (strain ATCC BAA-621 / DSM 15236 / T118) (Rhodoferax ferrireducens) protein is Molybdenum cofactor guanylyltransferase.